Reading from the N-terminus, the 314-residue chain is Methionyl-tRNA formyltransferase (314 aa).

(6S)-5,6,7,8-tetrahydrofolate is bound at residue 110–113; sequence SLLP.

The protein belongs to the Fmt family.

The enzyme catalyses L-methionyl-tRNA(fMet) + (6R)-10-formyltetrahydrofolate = N-formyl-L-methionyl-tRNA(fMet) + (6S)-5,6,7,8-tetrahydrofolate + H(+). Attaches a formyl group to the free amino group of methionyl-tRNA(fMet). The formyl group appears to play a dual role in the initiator identity of N-formylmethionyl-tRNA by promoting its recognition by IF2 and preventing the misappropriation of this tRNA by the elongation apparatus. This Bacillus cereus (strain G9842) protein is Methionyl-tRNA formyltransferase.